A 102-amino-acid polypeptide reads, in one-letter code: Small ribosomal subunit protein uS10 (102 aa).

This sequence belongs to the universal ribosomal protein uS10 family. As to quaternary structure, part of the 30S ribosomal subunit.

Its function is as follows. Involved in the binding of tRNA to the ribosomes. In Bacillus thuringiensis (strain Al Hakam), this protein is Small ribosomal subunit protein uS10.